The chain runs to 99 residues: DNA-directed RNA polymerase subunit omega (99 aa).

The protein belongs to the RNA polymerase subunit omega family. The RNAP catalytic core consists of 2 alpha, 1 beta, 1 beta' and 1 omega subunit. When a sigma factor is associated with the core the holoenzyme is formed, which can initiate transcription.

The enzyme catalyses RNA(n) + a ribonucleoside 5'-triphosphate = RNA(n+1) + diphosphate. In terms of biological role, promotes RNA polymerase assembly. Latches the N- and C-terminal regions of the beta' subunit thereby facilitating its interaction with the beta and alpha subunits. The protein is DNA-directed RNA polymerase subunit omega (rpoZ) of Deinococcus radiodurans (strain ATCC 13939 / DSM 20539 / JCM 16871 / CCUG 27074 / LMG 4051 / NBRC 15346 / NCIMB 9279 / VKM B-1422 / R1).